A 229-amino-acid polypeptide reads, in one-letter code: Thylakoid lumenal 19 kDa protein, chloroplastic (229 aa).

It localises to the plastid. The protein localises to the chloroplast thylakoid lumen. In Arabidopsis thaliana (Mouse-ear cress), this protein is Thylakoid lumenal 19 kDa protein, chloroplastic.